Reading from the N-terminus, the 742-residue chain is 5-methyltetrahydropteroyltriglutamate--homocysteine methyltransferase (742 aa).

Residues 18-21 and Lys112 contribute to the 5-methyltetrahydropteroyltri-L-glutamate site; that span reads REWK. Residues 420–422 and Glu473 each bind L-homocysteine; that span reads IGS. L-methionine-binding positions include 420–422 and Glu473; that span reads IGS. Position 550 (Trp550) interacts with 5-methyltetrahydropteroyltri-L-glutamate. Asp588 provides a ligand contact to L-homocysteine. Position 588 (Asp588) interacts with L-methionine. Glu594 is a 5-methyltetrahydropteroyltri-L-glutamate binding site. Residues His630, Cys632, and Glu654 each coordinate Zn(2+). Residue His683 is the Proton donor of the active site. Cys715 contributes to the Zn(2+) binding site.

It belongs to the vitamin-B12 independent methionine synthase family. It depends on Zn(2+) as a cofactor.

The enzyme catalyses 5-methyltetrahydropteroyltri-L-glutamate + L-homocysteine = tetrahydropteroyltri-L-glutamate + L-methionine. Its pathway is amino-acid biosynthesis; L-methionine biosynthesis via de novo pathway; L-methionine from L-homocysteine (MetE route): step 1/1. Its function is as follows. Catalyzes the transfer of a methyl group from 5-methyltetrahydrofolate to homocysteine resulting in methionine formation. This chain is 5-methyltetrahydropteroyltriglutamate--homocysteine methyltransferase, found in Staphylococcus aureus (strain Mu3 / ATCC 700698).